Consider the following 270-residue polypeptide: Formamidopyrimidine-DNA glycosylase (270 aa).

The active-site Schiff-base intermediate with DNA is the proline 2. The active-site Proton donor is the glutamate 3. Residue lysine 58 is the Proton donor; for beta-elimination activity of the active site. Residues histidine 91, arginine 110, and arginine 151 each coordinate DNA. The FPG-type zinc-finger motif lies at 236 to 270; sequence FVYGRGGMPCKLCGTTLREAKLGQRASVYCPRCQR. Arginine 260 (proton donor; for delta-elimination activity) is an active-site residue.

It belongs to the FPG family. As to quaternary structure, monomer. Requires Zn(2+) as cofactor.

It catalyses the reaction Hydrolysis of DNA containing ring-opened 7-methylguanine residues, releasing 2,6-diamino-4-hydroxy-5-(N-methyl)formamidopyrimidine.. It carries out the reaction 2'-deoxyribonucleotide-(2'-deoxyribose 5'-phosphate)-2'-deoxyribonucleotide-DNA = a 3'-end 2'-deoxyribonucleotide-(2,3-dehydro-2,3-deoxyribose 5'-phosphate)-DNA + a 5'-end 5'-phospho-2'-deoxyribonucleoside-DNA + H(+). In terms of biological role, involved in base excision repair of DNA damaged by oxidation or by mutagenic agents. Acts as a DNA glycosylase that recognizes and removes damaged bases. Has a preference for oxidized purines, such as 7,8-dihydro-8-oxoguanine (8-oxoG). Has AP (apurinic/apyrimidinic) lyase activity and introduces nicks in the DNA strand. Cleaves the DNA backbone by beta-delta elimination to generate a single-strand break at the site of the removed base with both 3'- and 5'-phosphates. In Pseudomonas putida (strain W619), this protein is Formamidopyrimidine-DNA glycosylase.